Reading from the N-terminus, the 198-residue chain is MDSLLMKQKKFLYHFKNVRWAKGRHETYLCYVVKRRDSATSCSLDFGHLRNKSGCHVELLFLRYISDWDLDPGRCYRVTWFTSWSPCYDCARHVAEFLRWNPNLSLRIFTARLYFCEDRKAEPEGLRRLHRAGVQIGIMTFKDYFYCWNTFVENRERTFKAWEGLHENSVRLTRQLRRILLPLYEVDDLRDAFRMLGF.

The Bipartite nuclear localization signal motif lies at 1–30 (MDSLLMKQKKFLYHFKNVRWAKGRHETYLC). An interaction with SUPT6H region spans residues 2–26 (DSLLMKQKKFLYHFKNVRWAKGRHE). The 107-residue stretch at 23–129 (GRHETYLCYV…KAEPEGLRRL (107 aa)) folds into the CMP/dCMP-type deaminase domain. Position 27 is a phosphothreonine; by PKA (Thr27). Ser38 is subject to Phosphoserine; by PKA. Residues 39-42 (ATSC) form an important for interaction with CTNNBL1 region. A Zn(2+)-binding site is contributed by His56. The active-site Proton donor is the Glu58. Zn(2+) contacts are provided by Cys87 and Cys90. The segment at 88 to 116 (YDCARHVAEFLRWNPNLSLRIFTARLYFC) is required for interaction with RNF126. The short motif at 183-198 (LYEVDDLRDAFRMLGF) is the Nuclear export signal element.

The protein belongs to the cytidine and deoxycytidylate deaminase family. As to quaternary structure, interacts with CTNNBL1; the interaction is important for the immunoglobulin switch activity of AICDA. Interacts (via its NLS) with KPNA1. Interacts with PKA/PRKACA and PRKAR1A/PKR1. Interacts with SUPT6H, TRIM28 and NCL. Directly interacts with MCM3AP/GANP; this interaction may favor AICDA recruitment to immunoglobulin variable region genes, hence promoting somatic hypermutations. The cofactor is Zn(2+). Post-translationally, ser-38 is the major site whereas Thr-27 is the minor site of phosphorylation. Phosphorylation regulates its class-switch recombination activity. In terms of processing, probably monoubiquitinated on several residues by RNF126. As to expression, expressed in germinal center B-cells (at protein level).

The protein localises to the nucleus. The protein resides in the cytoplasm. The enzyme catalyses a 2'-deoxycytidine in single-stranded DNA + H2O + H(+) = a 2'-deoxyuridine in single-stranded DNA + NH4(+). Single-stranded DNA-specific cytidine deaminase. Involved in somatic hypermutation (SHM), gene conversion, and class-switch recombination (CSR) in B-lymphocytes by deaminating C to U during transcription of Ig-variable (V) and Ig-switch (S) region DNA. Required for several crucial steps of B-cell terminal differentiation necessary for efficient antibody responses. May also play a role in the epigenetic regulation of gene expression by participating in DNA demethylation. The protein is Single-stranded DNA cytosine deaminase (Aicda) of Mus musculus (Mouse).